The primary structure comprises 256 residues: Small ribosomal subunit protein eS1B (256 aa).

Residue Ala2 is modified to N-acetylalanine; partial.

It belongs to the eukaryotic ribosomal protein eS1 family. Component of the small ribosomal subunit. Mature ribosomes consist of a small (40S) and a large (60S) subunit. The 40S subunit contains about 33 different proteins and 1 molecule of RNA (18S). The 60S subunit contains about 49 different proteins and 3 molecules of RNA (25S, 5.8S and 5S).

It is found in the cytoplasm. The polypeptide is Small ribosomal subunit protein eS1B (Clavispora lusitaniae (strain ATCC 42720) (Yeast)).